A 196-amino-acid polypeptide reads, in one-letter code: Peptide deformylase (196 aa).

Positions 97 and 139 each coordinate Fe cation. Residue E140 is part of the active site. H143 lines the Fe cation pocket. The segment covering 171-187 (LDAQEPKRAPHSPHTDA) has biased composition (basic and acidic residues). The tract at residues 171 to 196 (LDAQEPKRAPHSPHTDAQKPGAASDL) is disordered.

The protein belongs to the polypeptide deformylase family. Requires Fe(2+) as cofactor.

The catalysed reaction is N-terminal N-formyl-L-methionyl-[peptide] + H2O = N-terminal L-methionyl-[peptide] + formate. In terms of biological role, removes the formyl group from the N-terminal Met of newly synthesized proteins. Requires at least a dipeptide for an efficient rate of reaction. N-terminal L-methionine is a prerequisite for activity but the enzyme has broad specificity at other positions. The chain is Peptide deformylase from Methylocella silvestris (strain DSM 15510 / CIP 108128 / LMG 27833 / NCIMB 13906 / BL2).